Reading from the N-terminus, the 276-residue chain is NH(3)-dependent NAD(+) synthetase (276 aa).

43-50 (GISGGVDS) is a binding site for ATP. Asp49 provides a ligand contact to Mg(2+). Residue Arg146 participates in deamido-NAD(+) binding. Thr166 is an ATP binding site. Residue Glu171 coordinates Mg(2+). Residues Lys179 and Asp186 each contribute to the deamido-NAD(+) site. ATP is bound by residues Lys195 and Thr217. Deamido-NAD(+) is bound at residue 266–267 (HK).

It belongs to the NAD synthetase family. In terms of assembly, homodimer.

The catalysed reaction is deamido-NAD(+) + NH4(+) + ATP = AMP + diphosphate + NAD(+) + H(+). It participates in cofactor biosynthesis; NAD(+) biosynthesis; NAD(+) from deamido-NAD(+) (ammonia route): step 1/1. Catalyzes the ATP-dependent amidation of deamido-NAD to form NAD. Uses ammonia as a nitrogen source. This chain is NH(3)-dependent NAD(+) synthetase, found in Shewanella pealeana (strain ATCC 700345 / ANG-SQ1).